A 230-amino-acid chain; its full sequence is Cutinase (230 aa).

The first 16 residues, 1–16, serve as a signal peptide directing secretion; sequence MKFFALTTFLAATASA. Residues Cys47 and Cys125 are joined by a disulfide bond. Catalysis depends on Ser136, which acts as the Nucleophile. A disulfide bond links Cys187 and Cys194. Residue Asp191 is part of the active site. The active-site Proton donor/acceptor is His204.

Belongs to the cutinase family. In terms of processing, the 2 disulfide bonds play a critical role in holding the catalytic residues in juxta-position; reduction of the disulfide bridges results in the complete inactivation of the enzyme.

Its subcellular location is the secreted. It catalyses the reaction cutin + H2O = cutin monomers.. Catalyzes the hydrolysis of complex carboxylic polyesters found in the cell wall of plants. Degrades cutin, a macromolecule that forms the structure of the plant cuticle. Allows pathogenic fungi to penetrate through the cuticular barrier into the host plant during the initial stage of fungal infection. The polypeptide is Cutinase (CUTA) (Fusarium solani subsp. cucurbitae (Neocosmosporum cucurbitae)).